The following is a 347-amino-acid chain: Protein O-mannose kinase (347 aa).

Residues Met1–Cys14 are Cytoplasmic-facing. Residues Gly15–Phe35 form a helical; Signal-anchor for type II membrane protein membrane-spanning segment. At Tyr36–Leu347 the chain is on the lumenal side. The 269-residue stretch at Val79 to Leu347 folds into the Protein kinase domain.

The protein belongs to the protein kinase superfamily. Ser/Thr protein kinase family. STKL subfamily.

It is found in the endoplasmic reticulum membrane. The enzyme catalyses 3-O-[beta-D-GalNAc-(1-&gt;3)-beta-D-GlcNAc-(1-&gt;4)-alpha-D-Man]-L-Thr-[protein] + ATP = 3-O-[beta-D-GalNAc-(1-&gt;3)-beta-D-GlcNAc-(1-&gt;4)-(O-6-P-alpha-D-Man)]-Thr-[protein] + ADP + H(+). Functionally, protein O-mannose kinase that specifically mediates phosphorylation at the 6-position of an O-mannose of the trisaccharide (N-acetylgalactosamine (GalNAc)-beta-1,3-N-acetylglucosamine (GlcNAc)-beta-1,4-mannose) to generate phosphorylated O-mannosyl trisaccharide (N-acetylgalactosamine-beta-1,3-N-acetylglucosamine-beta-1,4-(phosphate-6-)mannose). Phosphorylated O-mannosyl trisaccharide is a carbohydrate structure present in alpha-dystroglycan (dag1), which is required for binding laminin G-like domain-containing extracellular proteins with high affinity. Only shows kinase activity when the GalNAc-beta-3-GlcNAc-beta-terminus is linked to the 4-position of O-mannose, suggesting that this disaccharide serves as the substrate recognition motif. In Danio rerio (Zebrafish), this protein is Protein O-mannose kinase (pomk).